A 364-amino-acid polypeptide reads, in one-letter code: Methylthioribose-1-phosphate isomerase (364 aa).

Substrate is bound by residues 53–55 (RGA), Arg-90, and Gln-203. The active-site Proton donor is Asp-244. 254-255 (NK) is a substrate binding site.

It belongs to the eIF-2B alpha/beta/delta subunits family. MtnA subfamily.

The catalysed reaction is 5-(methylsulfanyl)-alpha-D-ribose 1-phosphate = 5-(methylsulfanyl)-D-ribulose 1-phosphate. The protein operates within amino-acid biosynthesis; L-methionine biosynthesis via salvage pathway; L-methionine from S-methyl-5-thio-alpha-D-ribose 1-phosphate: step 1/6. Catalyzes the interconversion of methylthioribose-1-phosphate (MTR-1-P) into methylthioribulose-1-phosphate (MTRu-1-P). This Rhizobium meliloti (strain 1021) (Ensifer meliloti) protein is Methylthioribose-1-phosphate isomerase.